We begin with the raw amino-acid sequence, 57 residues long: Small hydrophobic protein (57 aa).

The Virion surface portion of the chain corresponds to 1–8; it reads MPAIQPPL. A helical transmembrane segment spans residues 9–29; sequence YPTFLLLILLSLIITLYVWII. Residues 30-57 lie on the Intravirion side of the membrane; the sequence is STITYKTAVRHAALHQRSFSRWSLDHSL.

Belongs to the rubulavirus small hydrophobic protein family. As to quaternary structure, interacts with host TNFRSF1A, RIPK1 and IRAK1; these interactions interfere with host NF-kappa-B activation at the level of receptor complexes. Interacts with host protein UBQLN4.

The protein resides in the virion membrane. The protein localises to the host cell membrane. In terms of biological role, plays a role in the inhibition of the host NF-kappa-B pathway. This inhibition occurs at the receptor level, by preventing the signaling of TNFR1 as well as IL-1R and TLR3. This Mumps virus genotype B (strain Miyahara vaccine) (MuV) protein is Small hydrophobic protein (SH).